The following is a 173-amino-acid chain: Large ribosomal subunit protein uL10 (173 aa).

This sequence belongs to the universal ribosomal protein uL10 family. In terms of assembly, part of the ribosomal stalk of the 50S ribosomal subunit. The N-terminus interacts with L11 and the large rRNA to form the base of the stalk. The C-terminus forms an elongated spine to which L12 dimers bind in a sequential fashion forming a multimeric L10(L12)X complex.

Functionally, forms part of the ribosomal stalk, playing a central role in the interaction of the ribosome with GTP-bound translation factors. This chain is Large ribosomal subunit protein uL10, found in Acidithiobacillus ferrooxidans (strain ATCC 23270 / DSM 14882 / CIP 104768 / NCIMB 8455) (Ferrobacillus ferrooxidans (strain ATCC 23270)).